Consider the following 321-residue polypeptide: Ribosomal large subunit pseudouridine synthase D (321 aa).

An S4 RNA-binding domain is found at 16–93; it reads YRLDYILSKL…IPLNIIYEDN (78 aa). Asp-142 is a catalytic residue.

It belongs to the pseudouridine synthase RluA family.

It is found in the cytoplasm. It carries out the reaction uridine(1911/1915/1917) in 23S rRNA = pseudouridine(1911/1915/1917) in 23S rRNA. In terms of biological role, responsible for synthesis of pseudouridine from uracil at positions 1911, 1915 and 1917 in 23S ribosomal RNA. This Blochmanniella floridana protein is Ribosomal large subunit pseudouridine synthase D (rluD).